The chain runs to 261 residues: 3-deoxy-manno-octulosonate cytidylyltransferase (261 aa).

This sequence belongs to the KdsB family.

Its subcellular location is the cytoplasm. It catalyses the reaction 3-deoxy-alpha-D-manno-oct-2-ulosonate + CTP = CMP-3-deoxy-beta-D-manno-octulosonate + diphosphate. It participates in nucleotide-sugar biosynthesis; CMP-3-deoxy-D-manno-octulosonate biosynthesis; CMP-3-deoxy-D-manno-octulosonate from 3-deoxy-D-manno-octulosonate and CTP: step 1/1. The protein operates within bacterial outer membrane biogenesis; lipopolysaccharide biosynthesis. Functionally, activates KDO (a required 8-carbon sugar) for incorporation into bacterial lipopolysaccharide in Gram-negative bacteria. In Dechloromonas aromatica (strain RCB), this protein is 3-deoxy-manno-octulosonate cytidylyltransferase.